The sequence spans 529 residues: Nucleolar protein 58 (529 aa).

A Phosphothreonine modification is found at Thr-34. At Ser-109 the chain carries Phosphoserine. The sufficient for interaction with NOPCHAP1 stretch occupies residues 155-400; it reads ADKVDTMIVQ…LEARLRTLED (246 aa). Lys-157 participates in a covalent cross-link: Glycyl lysine isopeptide (Lys-Gly) (interchain with G-Cter in SUMO2). Positions 282–400 constitute a Nop domain; sequence IAPNVTVMVG…LEARLRTLED (119 aa). Ser-304 and Ser-351 each carry phosphoserine. Glycyl lysine isopeptide (Lys-Gly) (interchain with G-Cter in SUMO2) cross-links involve residues Lys-353, Lys-411, Lys-415, Lys-422, Lys-426, Lys-441, Lys-444, and Lys-465. The disordered stretch occupies residues 409-529; sequence TGKALAKTEK…KKKKKRENED (121 aa). The span at 414–427 shows a compositional bias: basic and acidic residues; it reads AKTEKYEHKSEVKT. A Glycyl lysine isopeptide (Lys-Gly) (interchain with G-Cter in SUMO); alternate cross-link involves residue Lys-467. Lys-467 is covalently cross-linked (Glycyl lysine isopeptide (Lys-Gly) (interchain with G-Cter in SUMO1); alternate). Lys-467 is covalently cross-linked (Glycyl lysine isopeptide (Lys-Gly) (interchain with G-Cter in SUMO2); alternate). A compositionally biased stretch (acidic residues) spans 469-481; sequence EEEEEEKVAEEEE. Residue Ser-483 is modified to Phosphoserine. Residue Lys-485 forms a Glycyl lysine isopeptide (Lys-Gly) (interchain with G-Cter in SUMO2) linkage. Positions 485–495 are enriched in basic residues; that stretch reads KKKKKRGKKKH. Lys-497 is covalently cross-linked (Glycyl lysine isopeptide (Lys-Gly) (interchain with G-Cter in SUMO); alternate). A Glycyl lysine isopeptide (Lys-Gly) (interchain with G-Cter in SUMO2); alternate cross-link involves residue Lys-497. 2 positions are modified to phosphoserine: Ser-502 and Ser-514. The segment covering 517-529 has biased composition (basic residues); it reads KKKKKKKKRENED.

This sequence belongs to the NOP5/NOP56 family. In terms of assembly, core component of box C/D small nucleolar ribonucleoprotein (snoRNP) particles; the core proteins SNU13, NOP56, NOP58 and FBL or FBLL1 assemble stepwise onto the snoRNA. Interacts with NOLC1/Nopp140. Interacts with NOPCHAP1, NUFIP1, RUVBL1 and RUVBL2; NOPCHAP1 bridges the association of NOP58 with RUVBL1:RUVBL2 and NUFIP1. Interacts with PIH1D1. Part of the small subunit (SSU) processome, composed of more than 70 proteins and the RNA chaperone small nucleolar RNA (snoRNA) U3. Sumoylation is essential for high-affinity binding to snoRNAs. Ubiquitous.

Its subcellular location is the nucleus. The protein resides in the nucleolus. The protein localises to the nucleoplasm. Its function is as follows. Required for the biogenesis of box C/D snoRNAs such as U3, U8 and U14 snoRNAs. Part of the small subunit (SSU) processome, first precursor of the small eukaryotic ribosomal subunit. During the assembly of the SSU processome in the nucleolus, many ribosome biogenesis factors, an RNA chaperone and ribosomal proteins associate with the nascent pre-rRNA and work in concert to generate RNA folding, modifications, rearrangements and cleavage as well as targeted degradation of pre-ribosomal RNA by the RNA exosome. Core component of box C/D small nucleolar ribonucleoprotein (snoRNP) complexes that function in methylation of multiple sites on ribosomal RNAs (rRNAs) and messenger RNAs (mRNAs). This is Nucleolar protein 58 from Homo sapiens (Human).